The sequence spans 64 residues: Carnocyclin-A (64 aa).

Positions 1-4 (MLYE) are excised as a propeptide. The segment at residues 5–64 (LVAYGIAQGTAEKVVSLINAGLTVGSIISILGGVTVGLSGVFTAVKAAIAKQGIKKAIQL) is a cross-link (cyclopeptide (Leu-Leu)).

It localises to the secreted. Cyclopeptide antibiotic that inhibits the growth of Gram-positive bacteria, but has no effect on the growth of Gram-negative bacteria. This chain is Carnocyclin-A, found in Carnobacterium maltaromaticum (Carnobacterium piscicola).